The chain runs to 161 residues: Protein PLASTID TRANSCRIPTIONALLY ACTIVE 7 (161 aa).

Residues 1–32 (MASFTCSSPSSILPIIDTRSGNLRCTFQSQVS) constitute a chloroplast transit peptide.

Component of the transcriptionally active chromosome (TAC) complexes. Interacts with FLN1, PTAC10, PTAC12/HMR/PAP5 and PTAC14. Binds to SL1/MTERF3. In terms of tissue distribution, mostly expressed in leaves, flowers and seedlings, and, to a lower extent, in roots and stems.

The protein resides in the plastid. It localises to the chloroplast. Its function is as follows. Essential for chloroplast development, especially for thylakoid formation. Involved in plastid gene expression, probably by maintaining plastid-encoded RNA polymerase (PEP) activity. The sequence is that of Protein PLASTID TRANSCRIPTIONALLY ACTIVE 7 from Arabidopsis thaliana (Mouse-ear cress).